The following is a 371-amino-acid chain: Chaperone protein DnaJ (371 aa).

The J domain occupies Asp5–Gly69. The CR-type zinc-finger motif lies at Gly133 to Arg215. Residues Cys146, Cys149, Cys163, Cys166, Cys189, Cys192, Cys203, and Cys206 each contribute to the Zn(2+) site. CXXCXGXG motif repeat units follow at residues Cys146–Gly153, Cys163–Gly170, Cys189–Gly196, and Cys203–Gly210.

This sequence belongs to the DnaJ family. Homodimer. Zn(2+) serves as cofactor.

The protein localises to the cytoplasm. Participates actively in the response to hyperosmotic and heat shock by preventing the aggregation of stress-denatured proteins and by disaggregating proteins, also in an autonomous, DnaK-independent fashion. Unfolded proteins bind initially to DnaJ; upon interaction with the DnaJ-bound protein, DnaK hydrolyzes its bound ATP, resulting in the formation of a stable complex. GrpE releases ADP from DnaK; ATP binding to DnaK triggers the release of the substrate protein, thus completing the reaction cycle. Several rounds of ATP-dependent interactions between DnaJ, DnaK and GrpE are required for fully efficient folding. Also involved, together with DnaK and GrpE, in the DNA replication of plasmids through activation of initiation proteins. This chain is Chaperone protein DnaJ, found in Bacillus cereus (strain ATCC 10987 / NRS 248).